Consider the following 402-residue polypeptide: B3 domain-containing protein Os01g0723500 (402 aa).

The TF-B3 1 DNA-binding region spans 18 to 121; that stretch reads RPHFFKVLVG…RFTAMVFDRT (104 aa). Positions 126–203 are disordered; sequence EDLMGGGGGD…VKNEEDADEL (78 aa). Positions 152–162 are enriched in basic and acidic residues; that stretch reads DAARPKKDSVG. Residues 173–186 are compositionally biased toward polar residues; the sequence is SGGQPLQIVDSSWT. Residues 289 to 381 constitute a DNA-binding region (TF-B3 2); the sequence is CVIRMSTMHV…EFRVHIFRVV (93 aa).

Its subcellular location is the nucleus. The sequence is that of B3 domain-containing protein Os01g0723500 from Oryza sativa subsp. japonica (Rice).